The primary structure comprises 394 residues: 8-amino-7-oxononanoate synthase (394 aa).

Arg-21 contributes to the substrate binding site. Gly-112–Tyr-113 is a binding site for pyridoxal 5'-phosphate. Residue His-137 participates in substrate binding. Pyridoxal 5'-phosphate contacts are provided by Ser-183, His-211, and Thr-239. Lys-242 bears the N6-(pyridoxal phosphate)lysine mark. A substrate-binding site is contributed by Thr-358.

This sequence belongs to the class-II pyridoxal-phosphate-dependent aminotransferase family. BioF subfamily. Homodimer. Pyridoxal 5'-phosphate serves as cofactor.

It catalyses the reaction 6-carboxyhexanoyl-[ACP] + L-alanine + H(+) = (8S)-8-amino-7-oxononanoate + holo-[ACP] + CO2. It participates in cofactor biosynthesis; biotin biosynthesis. Functionally, catalyzes the decarboxylative condensation of pimeloyl-[acyl-carrier protein] and L-alanine to produce 8-amino-7-oxononanoate (AON), [acyl-carrier protein], and carbon dioxide. In Burkholderia pseudomallei (strain K96243), this protein is 8-amino-7-oxononanoate synthase.